The following is a 1157-amino-acid chain: Zinc finger protein 516 (1157 aa).

Positions 1–13 (MDRSREAEMELRR) are enriched in basic and acidic residues. The tract at residues 1–26 (MDRSREAEMELRRGPSPPRAGRSHEV) is disordered. Residues 1–420 (MDRSREAEME…ATRGKVAEPA (420 aa)) are mediates promoter DNA-binding and activation of transcription. 7 consecutive C2H2-type zinc fingers follow at residues 34 to 56 (HSCC…MRKH), 62 to 84 (YKCP…IRSH), 162 to 185 (VPCS…HQAH), 188 to 211 (FKCR…ERDH), 236 to 258 (FPCE…MKKH), 264 to 286 (HGCH…MKAH), and 323 to 345 (EVCT…NAIH). The span at 449 to 458 (SQEKRKREQD) shows a compositional bias: basic and acidic residues. Disordered stretches follow at residues 449–503 (SQEK…QGKS) and 523–653 (SRVH…KGPE). The segment covering 494 to 503 (ASATTGQGKS) has biased composition (polar residues). The C2H2-type 8 zinc-finger motif lies at 504–526 (SECFECGKIFRTYHQMVLHSRVH). Over residues 531 to 541 (RDRDPEGDRAA) the composition is skewed to basic and acidic residues. The segment covering 550–561 (EGDSASQPSSPG) has biased composition (polar residues). Acidic residues predominate over residues 575 to 585 (EVVDDSGEEAV). Positions 601–612 (GEVTPTALSNGD) are enriched in polar residues. Lys630 participates in a covalent cross-link: Glycyl lysine isopeptide (Lys-Gly) (interchain with G-Cter in SUMO2). Over residues 644-653 (SSRETTKGPE) the composition is skewed to basic and acidic residues. Residue Lys669 forms a Glycyl lysine isopeptide (Lys-Gly) (interchain with G-Cter in SUMO2) linkage. The C2H2-type 9; atypical zinc finger occupies 753-776 (HPCPYCTHKTYYPEVLWMHKRIWH). Disordered stretches follow at residues 831-996 (TQVP…EPSV) and 1013-1040 (RGEA…AEGQ). The span at 914–928 (GSGSLSRSTTPTPSV) shows a compositional bias: polar residues. Residues Lys1032 and Lys1051 each participate in a glycyl lysine isopeptide (Lys-Gly) (interchain with G-Cter in SUMO2) cross-link. The C2H2-type 10 zinc finger occupies 1092–1114 (FVCVECGKSFHQPSQLRAHLRAH). Residues 1123–1157 (PRDSEVHTASTDAPKQGRDHTTPGTVPAGPLRKGI) form a disordered region.

The protein belongs to the krueppel C2H2-type zinc-finger protein family. As to quaternary structure, interacts with PRDM16; the interaction is direct and may play a role in the transcription of brown adipose tissue-specific genes. Interacts with PWWP2B. Interacts with HDAC1; this interaction is enhanced in the presence of PWWP2B. As to expression, expressed by adipocytes more specifically in brown adipose tissue compared to white adipose tissue (WAT).

Its subcellular location is the nucleus. Transcriptional regulator that binds to the promoter and activates the transcription of genes promoting brown adipose tissue (BAT) differentiation. Among brown adipose tissue-specific genes, binds the proximal region of the promoter of the UCP1 gene to activate its transcription and thereby regulate thermogenesis. May also play a role in the cellular response to replication stress. This is Zinc finger protein 516 from Mus musculus (Mouse).